Consider the following 89-residue polypeptide: Putative defensin-like protein 254 (89 aa).

A signal peptide spans 1-20 (MHNISFKLLLLCDLFLSSSS). Disulfide bonds link Cys31/Cys48 and Cys37/Cys55.

It belongs to the DEFL family.

The protein localises to the secreted. The chain is Putative defensin-like protein 254 from Arabidopsis thaliana (Mouse-ear cress).